Reading from the N-terminus, the 475-residue chain is Putative aldehyde dehydrogenase SH0913 (475 aa).

Position 201-207 (Gly201–Gly207) interacts with NAD(+). Active-site residues include Glu245 and Cys279.

The protein belongs to the aldehyde dehydrogenase family.

It catalyses the reaction an aldehyde + NAD(+) + H2O = a carboxylate + NADH + 2 H(+). The chain is Putative aldehyde dehydrogenase SH0913 from Staphylococcus haemolyticus (strain JCSC1435).